The primary structure comprises 363 residues: tRNA N6-adenosine threonylcarbamoyltransferase (363 aa).

Positions 127 and 131 each coordinate Fe cation. Substrate is bound by residues 150–154 (LISGG), aspartate 183, glycine 196, and asparagine 290. Aspartate 318 contributes to the Fe cation binding site.

It belongs to the KAE1 / TsaD family. Fe(2+) is required as a cofactor.

The protein localises to the cytoplasm. It catalyses the reaction L-threonylcarbamoyladenylate + adenosine(37) in tRNA = N(6)-L-threonylcarbamoyladenosine(37) in tRNA + AMP + H(+). Functionally, required for the formation of a threonylcarbamoyl group on adenosine at position 37 (t(6)A37) in tRNAs that read codons beginning with adenine. Is involved in the transfer of the threonylcarbamoyl moiety of threonylcarbamoyl-AMP (TC-AMP) to the N6 group of A37, together with TsaE and TsaB. TsaD likely plays a direct catalytic role in this reaction. The sequence is that of tRNA N6-adenosine threonylcarbamoyltransferase from Zymomonas mobilis subsp. mobilis (strain ATCC 31821 / ZM4 / CP4).